Consider the following 84-residue polypeptide: NADH-ubiquinone oxidoreductase chain 4L (84 aa).

The next 2 membrane-spanning stretches (helical) occupy residues 19–39 (ITLL…LIHI) and 50–70 (IFSL…LSIL).

The protein belongs to the complex I subunit 4L family.

It is found in the mitochondrion membrane. It carries out the reaction a ubiquinone + NADH + 5 H(+)(in) = a ubiquinol + NAD(+) + 4 H(+)(out). Functionally, core subunit of the mitochondrial membrane respiratory chain NADH dehydrogenase (Complex I) that is believed to belong to the minimal assembly required for catalysis. Complex I functions in the transfer of electrons from NADH to the respiratory chain. The immediate electron acceptor for the enzyme is believed to be ubiquinone. This is NADH-ubiquinone oxidoreductase chain 4L (NAD4L) from Candida albicans (strain SC5314 / ATCC MYA-2876) (Yeast).